The following is a 431-amino-acid chain: ETS domain-containing protein Elk-4 (431 aa).

A DNA-binding region (ETS) is located at residues 5 to 85; that stretch reads ITLWQFLLQL…NGQKFVYKFV (81 aa). The disordered stretch occupies residues 114 to 139; it reads SSSSKDVENGGKDKPPQPGAKTSSRN. Residues 118-128 are compositionally biased toward basic and acidic residues; the sequence is KDVENGGKDKP. A Glycyl lysine isopeptide (Lys-Gly) (interchain with G-Cter in SUMO2) cross-link involves residue lysine 167. At serine 180 the chain carries Phosphoserine. Disordered regions lie at residues 251-282, 294-323, and 411-431; these read TTPP…DTDI, ENLS…KKPK, and TLSG…LQKT. Residues 261–273 are compositionally biased toward pro residues; it reads LQEPPRTPSPPLS. Over residues 299–313 the composition is skewed to basic and acidic residues; the sequence is EPKDQDSVLLEKDKV.

Belongs to the ETS family. As to quaternary structure, interacts with SIRT7.

The protein resides in the nucleus. Functionally, involved in both transcriptional activation and repression. Interaction with SIRT7 leads to recruitment and stabilization of SIRT7 at promoters, followed by deacetylation of histone H3 at 'Lys-18' (H3K18Ac) and subsequent transcription repression. Forms a ternary complex with the serum response factor (SRF). Requires DNA-bound SRF for ternary complex formation and makes extensive DNA contacts to the 5'side of SRF, but does not bind DNA autonomously. This is ETS domain-containing protein Elk-4 (ELK4) from Homo sapiens (Human).